The chain runs to 422 residues: MLLLLVLLIGASGINAVVYKEVPIQANTDTLEYVHTVWRHGDRTPAELLFPDDITKWPEGLGELTEQGAAQQYRLGQWLKRRYGSWLGEKFNRNAIYIRSSDYNRTLMSAQANMAGLFPPKYPIAGGLMWQPIPVHTISKPTDKELYEEASCPTAEIEMNAQWKSTKANGIRKKFARELSFFSQKLNLPNMELKATWRIFDNLFCEKQNNITWPSWMNSSIFERVDQLYNEVSQLEFHTDTLRRLRGGTLLEEIFHRFSDKASGSLGKEAKFYAYSAHDSTIAALLATLGVFYDIYPKYATCLLIEMHKLANETRLIRVFHKNETDIDRLIEYSIPGCDDPCTLQKLGDDLKKYFPEDWEAECGLKTSFQFIYLVIISILVISTVCSCTMLFVEKQKRKILRFPVDGLRDDTAPMLGGDDSD.

A signal peptide spans 1–13 (MLLLLVLLIGASG). Catalysis depends on H40, which acts as the Nucleophile. N104, N210, and N218 each carry an N-linked (GlcNAc...) asparagine glycan. Cystine bridges form between C152–C363, C205–C302, and C338–C342. Catalysis depends on D279, which acts as the Proton donor. N312 and N323 each carry an N-linked (GlcNAc...) asparagine glycan.

Belongs to the histidine acid phosphatase family.

It carries out the reaction a phosphate monoester + H2O = an alcohol + phosphate. This chain is Putative acid phosphatase 5 (pho-5), found in Caenorhabditis elegans.